Reading from the N-terminus, the 131-residue chain is Small ribosomal subunit protein uS8 (131 aa).

Belongs to the universal ribosomal protein uS8 family. As to quaternary structure, part of the 30S ribosomal subunit. Contacts proteins S5 and S12.

Its function is as follows. One of the primary rRNA binding proteins, it binds directly to 16S rRNA central domain where it helps coordinate assembly of the platform of the 30S subunit. In Aromatoleum aromaticum (strain DSM 19018 / LMG 30748 / EbN1) (Azoarcus sp. (strain EbN1)), this protein is Small ribosomal subunit protein uS8.